Consider the following 145-residue polypeptide: Oleosin L (145 aa).

Position 2 is an N-acetylalanine (A2). The next 2 membrane-spanning stretches (helical) occupy residues 36 to 56 and 59 to 79; these read GSLLVLSGLTLAGTVIALTIA and LLVIFSPVLVPAVITIFLLGA. A Proline-knot motif is present at residues 58–69; that stretch reads PLLVIFSPVLVP. Over residues 123 to 132 the composition is skewed to basic and acidic residues; the sequence is KAREMKDRAE. The tract at residues 123–145 is disordered; the sequence is KAREMKDRAEQFSQQPVAGSQTS. Over residues 133 to 145 the composition is skewed to polar residues; sequence QFSQQPVAGSQTS.

This sequence belongs to the oleosin family. Expressed in seeds (at protein level).

The protein resides in the lipid droplet. It localises to the membrane. Its function is as follows. May have a structural role to stabilize the lipid body during desiccation of the seed by preventing coalescence of the oil. Probably interacts with both lipid and phospholipid moieties of lipid bodies. May also provide recognition signals for specific lipase anchorage in lipolysis during seedling growth. This chain is Oleosin L, found in Sesamum indicum (Oriental sesame).